The chain runs to 56 residues: Photosystem II reaction center X protein (56 aa).

The helical transmembrane segment at 27–47 threads the bilayer; that stretch reads IGSFLAAGALIVAPAAAALIW.

The protein belongs to the PsbX family. Type 2 subfamily. PSII consists of a core antenna complex that captures photons, and an electron transfer chain that converts photonic excitation into a charge separation. PSII forms dimeric complexes.

It localises to the cellular thylakoid membrane. Its function is as follows. Involved in the binding and/or turnover of quinones at the Q(B) site of Photosystem II. This chain is Photosystem II reaction center X protein, found in Prochlorococcus marinus (strain NATL2A).